Here is a 127-residue protein sequence, read N- to C-terminus: Small ribosomal subunit protein uS12 (127 aa).

The span at 11-20 (GRKPKKKKSK) shows a compositional bias: basic residues. The segment at 11 to 30 (GRKPKKKKSKAPALQGNPQK) is disordered. A 3-methylthioaspartic acid modification is found at Asp-89. The interval 105 to 127 (AGVEGRRQSRSKYGAKRPKDQKK) is disordered. Positions 112–127 (QSRSKYGAKRPKDQKK) are enriched in basic residues.

The protein belongs to the universal ribosomal protein uS12 family. Part of the 30S ribosomal subunit. Contacts proteins S8 and S17. May interact with IF1 in the 30S initiation complex.

With S4 and S5 plays an important role in translational accuracy. In terms of biological role, interacts with and stabilizes bases of the 16S rRNA that are involved in tRNA selection in the A site and with the mRNA backbone. Located at the interface of the 30S and 50S subunits, it traverses the body of the 30S subunit contacting proteins on the other side and probably holding the rRNA structure together. The combined cluster of proteins S8, S12 and S17 appears to hold together the shoulder and platform of the 30S subunit. The polypeptide is Small ribosomal subunit protein uS12 (Thermotoga maritima (strain ATCC 43589 / DSM 3109 / JCM 10099 / NBRC 100826 / MSB8)).